The primary structure comprises 574 residues: Proline--tRNA ligase (574 aa).

It belongs to the class-II aminoacyl-tRNA synthetase family. ProS type 1 subfamily. Homodimer.

The protein resides in the cytoplasm. The enzyme catalyses tRNA(Pro) + L-proline + ATP = L-prolyl-tRNA(Pro) + AMP + diphosphate. In terms of biological role, catalyzes the attachment of proline to tRNA(Pro) in a two-step reaction: proline is first activated by ATP to form Pro-AMP and then transferred to the acceptor end of tRNA(Pro). As ProRS can inadvertently accommodate and process non-cognate amino acids such as alanine and cysteine, to avoid such errors it has two additional distinct editing activities against alanine. One activity is designated as 'pretransfer' editing and involves the tRNA(Pro)-independent hydrolysis of activated Ala-AMP. The other activity is designated 'posttransfer' editing and involves deacylation of mischarged Ala-tRNA(Pro). The misacylated Cys-tRNA(Pro) is not edited by ProRS. This chain is Proline--tRNA ligase, found in Desulfovibrio desulfuricans (strain ATCC 27774 / DSM 6949 / MB).